The chain runs to 193 residues: MIGRIAGILLEKNPPHLLVDCNGVGYEIDVPMSTFYNLPQTGERVVLLTQQIVREDAHLLYGFLTPQERTTFRELLKITGIGARMALAVLSGMSVQELAQAVTMQDAARLTRLPGIGKKTAERLLLELKGKLGADLGALAGAASQSDHAADILNALVALGYSEKEGLAAIKNVPAGTGVSEGIKLALKALSKV.

The interval 1–64 (MIGRIAGILL…EDAHLLYGFL (64 aa)) is domain I. The interval 65–139 (TPQERTTFRE…GKLGADLGAL (75 aa)) is domain II. A flexible linker region spans residues 139 to 143 (LAGAA). The interval 144 to 193 (SQSDHAADILNALVALGYSEKEGLAAIKNVPAGTGVSEGIKLALKALSKV) is domain III.

The protein belongs to the RuvA family. In terms of assembly, homotetramer. Forms an RuvA(8)-RuvB(12)-Holliday junction (HJ) complex. HJ DNA is sandwiched between 2 RuvA tetramers; dsDNA enters through RuvA and exits via RuvB. An RuvB hexamer assembles on each DNA strand where it exits the tetramer. Each RuvB hexamer is contacted by two RuvA subunits (via domain III) on 2 adjacent RuvB subunits; this complex drives branch migration. In the full resolvosome a probable DNA-RuvA(4)-RuvB(12)-RuvC(2) complex forms which resolves the HJ.

Its subcellular location is the cytoplasm. In terms of biological role, the RuvA-RuvB-RuvC complex processes Holliday junction (HJ) DNA during genetic recombination and DNA repair, while the RuvA-RuvB complex plays an important role in the rescue of blocked DNA replication forks via replication fork reversal (RFR). RuvA specifically binds to HJ cruciform DNA, conferring on it an open structure. The RuvB hexamer acts as an ATP-dependent pump, pulling dsDNA into and through the RuvAB complex. HJ branch migration allows RuvC to scan DNA until it finds its consensus sequence, where it cleaves and resolves the cruciform DNA. This Burkholderia ambifaria (strain ATCC BAA-244 / DSM 16087 / CCUG 44356 / LMG 19182 / AMMD) (Burkholderia cepacia (strain AMMD)) protein is Holliday junction branch migration complex subunit RuvA.